A 341-amino-acid polypeptide reads, in one-letter code: S-adenosylmethionine:tRNA ribosyltransferase-isomerase (341 aa).

Belongs to the QueA family. Monomer.

Its subcellular location is the cytoplasm. It carries out the reaction 7-aminomethyl-7-carbaguanosine(34) in tRNA + S-adenosyl-L-methionine = epoxyqueuosine(34) in tRNA + adenine + L-methionine + 2 H(+). The protein operates within tRNA modification; tRNA-queuosine biosynthesis. Its function is as follows. Transfers and isomerizes the ribose moiety from AdoMet to the 7-aminomethyl group of 7-deazaguanine (preQ1-tRNA) to give epoxyqueuosine (oQ-tRNA). The chain is S-adenosylmethionine:tRNA ribosyltransferase-isomerase from Clostridium botulinum (strain Eklund 17B / Type B).